A 218-amino-acid chain; its full sequence is Lactosylceramide 4-alpha-galactosyltransferase (218 aa).

The DXD motif motif lies at Asp57–Asp59.

It belongs to the glycosyltransferase 32 family.

It is found in the golgi apparatus membrane. The enzyme catalyses a beta-D-Gal-(1-&gt;4)-beta-D-Glc-(1&lt;-&gt;1)-Cer(d18:1(4E)) + UDP-alpha-D-galactose = a globoside Gb3Cer (d18:1(4E)) + UDP + H(+). It carries out the reaction a beta-D-Gal-(1&lt;-&gt;1')-ceramide + UDP-alpha-D-galactose = alpha-D-Gal-(1-&gt;4)-beta-D-Gal-(1&lt;-&gt;1')-Cer + UDP + H(+). It participates in glycolipid biosynthesis. Its function is as follows. Catalyzes the transfer of galactose from UDP-alpha-D-galactose to lactosylceramide/beta-D-galactosyl-(1-&gt;4)-beta-D-glucosyl-(1&lt;-&gt;1)-ceramide(d18:1(4E)) to produce globotriaosylceramide/globoside Gb3Cer (d18:1(4E)). Also able to transfer galactose to galactosylceramide/beta-D-Gal-(1&lt;-&gt;1')-Cer. Globoside Gb3Cer is a glycosphingolipid of the globo serie, one of the major types of neutral root structures of glycosphingolipids, that constitute a significant portion of mammalian cell membranes. The chain is Lactosylceramide 4-alpha-galactosyltransferase (A4GALT) from Pongo pygmaeus (Bornean orangutan).